Consider the following 1574-residue polypeptide: Centrosomal protein of 170 kDa protein B (1574 aa).

Residues 23 to 73 (IFVGRDECELMLQSRSVDKQHAVINYDQDRDEHWVKDLGSLNGTFVNDVRI) form the FHA domain. 3 disordered regions span residues 121-258 (VSVK…GVGG), 316-395 (DWLV…RDPQ), and 409-578 (FDGD…QDQE). Basic and acidic residues-rich tracts occupy residues 147–157 (RPEKGDRRHGA), 182–197 (SEDR…RPKD), and 325–344 (LLRR…DLPV). Ser360 is subject to Phosphoserine. Residues 370-382 (ASVSGASAEASGE) are compositionally biased toward low complexity. Phosphoserine is present on Ser421. Residues 430 to 446 (PKADKRRGPGTSDRDRP) are compositionally biased toward basic and acidic residues. The span at 452-463 (ATGSSSGPQRAS) shows a compositional bias: polar residues. The span at 465-474 (LKREKTEERL) shows a compositional bias: basic and acidic residues. Residues 475-488 (GNTSPVPRASTRSF) show a composition bias toward polar residues. Phosphoserine is present on residues Ser478 and Ser490. The span at 518-528 (EKTPPVLPAPL) shows a compositional bias: pro residues. Ser534 is modified (phosphoserine). 2 positions are modified to phosphothreonine: Thr540 and Thr541. Ser595, Ser617, Ser653, Ser709, Ser744, Ser746, Ser749, Ser751, Ser819, and Ser843 each carry phosphoserine. Disordered stretches follow at residues 637–826 (PGMA…RDGL), 839–882 (RSGR…HISS), 924–1300 (SKSA…DPYG), 1333–1358 (AGDG…NTPA), 1377–1407 (NFQK…TNKT), and 1510–1535 (NRAP…TSPA). Residues 857 to 867 (FARQESFTKEP) are compositionally biased toward polar residues. At Ser947 the chain carries Phosphoserine. Over residues 950-959 (DTASTISLLS) the composition is skewed to polar residues. Residues Ser965 and Ser981 each carry the phosphoserine modification. Over residues 996–1005 (ARERMSERQH) the composition is skewed to basic and acidic residues. Positions 1084-1102 (RSSATAQKVQQALTRSNSL) are enriched in polar residues. Ser1122 is subject to Phosphoserine. The segment covering 1134–1146 (AANPEPANRAAPE) has biased composition (low complexity). Phosphoserine is present on residues Ser1166 and Ser1186. A compositionally biased stretch (low complexity) spans 1199 to 1213 (AEARAAAKKAAATAA). The span at 1265-1282 (HASTATQTPRGSSSTRAR) shows a compositional bias: polar residues. Thr1289 carries the post-translational modification Phosphothreonine. Position 1341 is a phosphoserine (Ser1341). Composition is skewed to polar residues over residues 1344–1358 (PTRS…NTPA) and 1385–1396 (SMNSHNLDQNMN). A Phosphothreonine modification is found at Thr1345. Ser1347 carries the phosphoserine modification. Phosphoserine is present on residues Ser1530 and Ser1533.

The protein belongs to the CEP170 family.

Its subcellular location is the cytoplasm. The protein resides in the cytoskeleton. Functionally, plays a role in microtubule organization. The polypeptide is Centrosomal protein of 170 kDa protein B (Cep170b) (Mus musculus (Mouse)).